The following is a 286-amino-acid chain: Bifunctional protein FolD (286 aa).

NADP(+)-binding positions include G165–S167 and S190.

Belongs to the tetrahydrofolate dehydrogenase/cyclohydrolase family. Homodimer.

It carries out the reaction (6R)-5,10-methylene-5,6,7,8-tetrahydrofolate + NADP(+) = (6R)-5,10-methenyltetrahydrofolate + NADPH. The catalysed reaction is (6R)-5,10-methenyltetrahydrofolate + H2O = (6R)-10-formyltetrahydrofolate + H(+). The protein operates within one-carbon metabolism; tetrahydrofolate interconversion. Functionally, catalyzes the oxidation of 5,10-methylenetetrahydrofolate to 5,10-methenyltetrahydrofolate and then the hydrolysis of 5,10-methenyltetrahydrofolate to 10-formyltetrahydrofolate. This chain is Bifunctional protein FolD, found in Paraburkholderia xenovorans (strain LB400).